The primary structure comprises 442 residues: Probable glycine dehydrogenase (decarboxylating) subunit 1 (442 aa).

This sequence belongs to the GcvP family. N-terminal subunit subfamily. The glycine cleavage system is composed of four proteins: P, T, L and H. In this organism, the P 'protein' is a heterodimer of two subunits.

It carries out the reaction N(6)-[(R)-lipoyl]-L-lysyl-[glycine-cleavage complex H protein] + glycine + H(+) = N(6)-[(R)-S(8)-aminomethyldihydrolipoyl]-L-lysyl-[glycine-cleavage complex H protein] + CO2. Its function is as follows. The glycine cleavage system catalyzes the degradation of glycine. The P protein binds the alpha-amino group of glycine through its pyridoxal phosphate cofactor; CO(2) is released and the remaining methylamine moiety is then transferred to the lipoamide cofactor of the H protein. This chain is Probable glycine dehydrogenase (decarboxylating) subunit 1, found in Geotalea daltonii (strain DSM 22248 / JCM 15807 / FRC-32) (Geobacter daltonii).